Here is a 248-residue protein sequence, read N- to C-terminus: Myelin protein P0 (248 aa).

A signal peptide spans 1 to 29; that stretch reads MAPGAPSSSPSPILAALLFSSLVLSPALA. The Ig-like V-type domain maps to 30-143; that stretch reads IVVYTDREIY…DIVGKTSQVT (114 aa). The Extracellular segment spans residues 30-153; it reads IVVYTDREIY…LYVFEKVPTR (124 aa). A disulfide bridge connects residues C50 and C127. N122 is a glycosylation site (N-linked (GlcNAc...) (complex) asparagine). The chain crosses the membrane as a helical span at residues 154–179; sequence YGVVLGAVIGGILGVVLLLLLLFYLI. The Cytoplasmic segment spans residues 180 to 248; that stretch reads RYCWLRRQAA…GLGESRKDKK (69 aa). S210 carries the phosphoserine; by PKC modification. A disordered region spans residues 222 to 248; that stretch reads MLDHSRSTKAASEKKSKGLGESRKDKK. Basic and acidic residues predominate over residues 224 to 248; sequence DHSRSTKAASEKKSKGLGESRKDKK. S226 and S228 each carry phosphoserine. A Phosphoserine; by PKC modification is found at S233. A phosphoserine mark is found at S237 and S243.

Belongs to the myelin P0 protein family. In terms of assembly, homodimer and homotetramer. N-glycosylated; contains sulfate-substituted glycan. In terms of tissue distribution, found only in peripheral nervous system Schwann cells.

It is found in the cell membrane. Is an adhesion molecule necessary for normal myelination in the peripheral nervous system. It mediates adhesion between adjacent myelin wraps and ultimately drives myelin compaction. This is Myelin protein P0 (Mpz) from Mus musculus (Mouse).